A 204-amino-acid chain; its full sequence is Protein GrpE (204 aa).

The segment at 1-42 is disordered; it reads MTDETAKNGPDAAADAQIEPQVQEETNSTAEDAGQDNNPTAA. Positions 23-41 are enriched in polar residues; sequence QEETNSTAEDAGQDNNPTA.

It belongs to the GrpE family. Homodimer.

It is found in the cytoplasm. Functionally, participates actively in the response to hyperosmotic and heat shock by preventing the aggregation of stress-denatured proteins, in association with DnaK and GrpE. It is the nucleotide exchange factor for DnaK and may function as a thermosensor. Unfolded proteins bind initially to DnaJ; upon interaction with the DnaJ-bound protein, DnaK hydrolyzes its bound ATP, resulting in the formation of a stable complex. GrpE releases ADP from DnaK; ATP binding to DnaK triggers the release of the substrate protein, thus completing the reaction cycle. Several rounds of ATP-dependent interactions between DnaJ, DnaK and GrpE are required for fully efficient folding. This Allorhizobium ampelinum (strain ATCC BAA-846 / DSM 112012 / S4) (Agrobacterium vitis (strain S4)) protein is Protein GrpE.